Consider the following 172-residue polypeptide: Large ribosomal subunit protein uL10 (172 aa).

It belongs to the universal ribosomal protein uL10 family. As to quaternary structure, part of the ribosomal stalk of the 50S ribosomal subunit. The N-terminus interacts with L11 and the large rRNA to form the base of the stalk. The C-terminus forms an elongated spine to which L12 dimers bind in a sequential fashion forming a multimeric L10(L12)X complex.

Its function is as follows. Forms part of the ribosomal stalk, playing a central role in the interaction of the ribosome with GTP-bound translation factors. In Chlorobium chlorochromatii (strain CaD3), this protein is Large ribosomal subunit protein uL10.